The chain runs to 556 residues: Formate--tetrahydrofolate ligase 1 (556 aa).

65–72 contacts ATP; the sequence is TPAGEGKS.

This sequence belongs to the formate--tetrahydrofolate ligase family.

The enzyme catalyses (6S)-5,6,7,8-tetrahydrofolate + formate + ATP = (6R)-10-formyltetrahydrofolate + ADP + phosphate. The protein operates within one-carbon metabolism; tetrahydrofolate interconversion. In Streptococcus pyogenes serotype M28 (strain MGAS6180), this protein is Formate--tetrahydrofolate ligase 1.